Reading from the N-terminus, the 148-residue chain is U2 snRNP component IST3 (148 aa).

Residues 31-109 form the RRM domain; the sequence is AYIYIGNLNR…RALKIDHTFY (79 aa).

Belongs to the IST3 family. As to quaternary structure, component of the 45S U1.U2.U4/U6.U5 penta-snRNP particle, a subcomplex of the spliceosome. Belongs to the CWC complex (or CEF1-associated complex), a spliceosome sub-complex reminiscent of a late-stage spliceosome composed of the U2, U5 and U6 snRNAs and at least BUD13, BUD31, BRR2, CDC40, CEF1, CLF1, CUS1, CWC2, CWC15, CWC21, CWC22, CWC23, CWC24, CWC25, CWC27, ECM2, HSH155, IST3, ISY1, LEA1, MSL1, NTC20, PRP8, PRP9, PRP11, PRP19, PRP21, PRP22, PRP45, PRP46, SLU7, SMB1, SMD1, SMD2, SMD3, SMX2, SMX3, SNT309, SNU114, SPP2, SYF1, SYF2, RSE1 and YJU2. Belongs to the pre-mRNA retention and splicing (RES) complex composed of at least BUD13, IST3 and PML1. Subunit of the U2 snRNP. Interacts with RDS3.

The protein resides in the cytoplasm. It localises to the nucleus. In terms of biological role, required for pre-mRNA splicing and spliceosome assembly. As part of the pre-mRNA retention and splicing (RES) complex, required for nuclear pre-mRNA retention and efficient splicing. Required for MER1-activated splicing. The protein is U2 snRNP component IST3 (IST3) of Saccharomyces cerevisiae (strain ATCC 204508 / S288c) (Baker's yeast).